A 1183-amino-acid chain; its full sequence is DNA-directed RNA polymerase subunit beta (1183 aa).

This sequence belongs to the RNA polymerase beta chain family. In terms of assembly, the RNAP catalytic core consists of 2 alpha, 1 beta, 1 beta' and 1 omega subunit. When a sigma factor is associated with the core the holoenzyme is formed, which can initiate transcription.

The catalysed reaction is RNA(n) + a ribonucleoside 5'-triphosphate = RNA(n+1) + diphosphate. DNA-dependent RNA polymerase catalyzes the transcription of DNA into RNA using the four ribonucleoside triphosphates as substrates. This is DNA-directed RNA polymerase subunit beta from Staphylococcus aureus (strain Mu50 / ATCC 700699).